The sequence spans 59 residues: Large ribosomal subunit protein uL30 (59 aa).

It belongs to the universal ribosomal protein uL30 family. As to quaternary structure, part of the 50S ribosomal subunit.

The polypeptide is Large ribosomal subunit protein uL30 (Staphylococcus saprophyticus subsp. saprophyticus (strain ATCC 15305 / DSM 20229 / NCIMB 8711 / NCTC 7292 / S-41)).